We begin with the raw amino-acid sequence, 170 residues long: Adenine phosphoribosyltransferase (170 aa).

Belongs to the purine/pyrimidine phosphoribosyltransferase family. Homodimer.

Its subcellular location is the cytoplasm. It catalyses the reaction AMP + diphosphate = 5-phospho-alpha-D-ribose 1-diphosphate + adenine. The protein operates within purine metabolism; AMP biosynthesis via salvage pathway; AMP from adenine: step 1/1. Catalyzes a salvage reaction resulting in the formation of AMP, that is energically less costly than de novo synthesis. This chain is Adenine phosphoribosyltransferase, found in Geobacillus kaustophilus (strain HTA426).